A 316-amino-acid chain; its full sequence is 4-hydroxy-3-methylbut-2-enyl diphosphate reductase (316 aa).

Cys-12 contacts [4Fe-4S] cluster. His-41 and His-74 together coordinate (2E)-4-hydroxy-3-methylbut-2-enyl diphosphate. Residues His-41 and His-74 each contribute to the dimethylallyl diphosphate site. Isopentenyl diphosphate-binding residues include His-41 and His-74. Cys-96 contributes to the [4Fe-4S] cluster binding site. A (2E)-4-hydroxy-3-methylbut-2-enyl diphosphate-binding site is contributed by His-124. Dimethylallyl diphosphate is bound at residue His-124. His-124 is a binding site for isopentenyl diphosphate. The active-site Proton donor is the Glu-126. Thr-169 lines the (2E)-4-hydroxy-3-methylbut-2-enyl diphosphate pocket. Position 199 (Cys-199) interacts with [4Fe-4S] cluster. Ser-227, Ser-228, Asn-229, and Ser-271 together coordinate (2E)-4-hydroxy-3-methylbut-2-enyl diphosphate. Dimethylallyl diphosphate contacts are provided by Ser-227, Ser-228, Asn-229, and Ser-271. Residues Ser-227, Ser-228, Asn-229, and Ser-271 each contribute to the isopentenyl diphosphate site.

Belongs to the IspH family. [4Fe-4S] cluster serves as cofactor.

The catalysed reaction is isopentenyl diphosphate + 2 oxidized [2Fe-2S]-[ferredoxin] + H2O = (2E)-4-hydroxy-3-methylbut-2-enyl diphosphate + 2 reduced [2Fe-2S]-[ferredoxin] + 2 H(+). It carries out the reaction dimethylallyl diphosphate + 2 oxidized [2Fe-2S]-[ferredoxin] + H2O = (2E)-4-hydroxy-3-methylbut-2-enyl diphosphate + 2 reduced [2Fe-2S]-[ferredoxin] + 2 H(+). Its pathway is isoprenoid biosynthesis; dimethylallyl diphosphate biosynthesis; dimethylallyl diphosphate from (2E)-4-hydroxy-3-methylbutenyl diphosphate: step 1/1. The protein operates within isoprenoid biosynthesis; isopentenyl diphosphate biosynthesis via DXP pathway; isopentenyl diphosphate from 1-deoxy-D-xylulose 5-phosphate: step 6/6. In terms of biological role, catalyzes the conversion of 1-hydroxy-2-methyl-2-(E)-butenyl 4-diphosphate (HMBPP) into a mixture of isopentenyl diphosphate (IPP) and dimethylallyl diphosphate (DMAPP). Acts in the terminal step of the DOXP/MEP pathway for isoprenoid precursor biosynthesis. This is 4-hydroxy-3-methylbut-2-enyl diphosphate reductase from Vibrio vulnificus (strain CMCP6).